We begin with the raw amino-acid sequence, 351 residues long: Nicotinate-nucleotide--dimethylbenzimidazole phosphoribosyltransferase (351 aa).

Glu319 (proton acceptor) is an active-site residue.

It belongs to the CobT family.

It carries out the reaction 5,6-dimethylbenzimidazole + nicotinate beta-D-ribonucleotide = alpha-ribazole 5'-phosphate + nicotinate + H(+). It participates in nucleoside biosynthesis; alpha-ribazole biosynthesis; alpha-ribazole from 5,6-dimethylbenzimidazole: step 1/2. Functionally, catalyzes the synthesis of alpha-ribazole-5'-phosphate from nicotinate mononucleotide (NAMN) and 5,6-dimethylbenzimidazole (DMB). This Desulforamulus reducens (strain ATCC BAA-1160 / DSM 100696 / MI-1) (Desulfotomaculum reducens) protein is Nicotinate-nucleotide--dimethylbenzimidazole phosphoribosyltransferase.